A 337-amino-acid chain; its full sequence is Ribonucleoside-diphosphate reductase small chain (337 aa).

Positions 85, 116, and 119 each coordinate Fe cation. The active site involves Y123. Residues E178, E212, and H215 each coordinate Fe cation.

It belongs to the ribonucleoside diphosphate reductase small chain family. Heterodimer of a large and a small subunit. The cofactor is Fe cation.

It carries out the reaction a 2'-deoxyribonucleoside 5'-diphosphate + [thioredoxin]-disulfide + H2O = a ribonucleoside 5'-diphosphate + [thioredoxin]-dithiol. Its function is as follows. Provides the precursors necessary for DNA synthesis. Catalyzes the biosynthesis of deoxyribonucleotides from the corresponding ribonucleotides. This is Ribonucleoside-diphosphate reductase small chain (RNR2) from Trypanosoma brucei brucei.